Here is a 200-residue protein sequence, read N- to C-terminus: Chromophore lyase CpcT/CpeT 2 (200 aa).

It belongs to the CpcT/CpeT biliprotein lyase family.

Covalently attaches a chromophore to Cys residue(s) of phycobiliproteins. The sequence is that of Chromophore lyase CpcT/CpeT 2 from Microcystis aeruginosa (strain NIES-843 / IAM M-2473).